The chain runs to 1372 residues: MAYSYTEKKRIRKSFAELPTVMDIPYLLSIQVDSYEQFLQEHKKPKARENTGLQAAYSSIFPIESHSGNAELQFVEYYLGTPEFDERECILRGSTFAAPMRVKIRLIIKDKDSKDKDSKAAIKDIREQSVYMGEMPLMTANGTFIINGTERVIVSQLHRSPGVFFDHDKGKSHSSGKVLYNARIIPYRGSWLDFEFDAKDLVFARIDRRRKLLASIILRALGLSTSEILDLFFDKVKVYKGEEQFEIDLVADRLRGEMAQFDIVTPEGDVVVEQGKRINARRIRQLEEAGMTKISIPDEYLYERILAEDIIVNDEVIARANTLIDHELLVKLSAFEASESIKEFSILFTNDIDQGSYIADTLRADSTSSREEALIEIYKVMRPGEPPTVETAEKLFDSMFFNADRYDLSNVGRMKFNRRLGLDFVDTDDADIQRERSVLTNADIVNVLKELIEIRNGRGEVDDIDHLGNRRIRSVGEMAENQFRVGLVRVERAVKERLSSAESDNLSPQDLINSKPVAAAVKEFFGSSQLSQFMDQNNPLSEVTHKRRVSALGPGGLTRERAGFEVRDVHDTHYGRVCPIETPEGPNIGLINSLATFAKTNSFGFLETPYRRVVDGKVTDVIEYLSAIEEVGTVIAQADSPVTADGALSDEMVSVRSYGEFVRMPPEKVTHMDVSPSQVVSVAAGLIPFLEHDDANRALMGSNMQRQAVPTLRADKPLVGTGMERHVARDSGVCVIAKRGGVIEDVDASRIVVRVNEAEMIAGEAGIDIYNLVKYTRSNQNTCINQRIIVNQGDEIAFGDILADGPSTDLGELALGQNIRIAFMPWNGYNFEDSILLSEKVVKEDRFTTIHIQELTCVARDTKLGTEEITADIPNVGEAALSSLDEAGIVYIGAEVDAGDILVGKVTPKGETQLTPEEKLLRAIFGEKAADVKDTSLRVPTSSKGTVIDVQVFTRDGVEKDARARAIEKSQLDSYRKDLKEELRIFEEAARGRIGNLLDGQKVSGGSGLKAGTIMALADMKDMSLETLLDIQPVEEEISERLTQIAEYLVDKQKDIDVKFAEKKRKLTAGDDLQHGVQKIVKVYLAVKRRIQPGDKMAGRHGNKGVVSRIMPVEDMPYDEHGNTVDIVLNPLGVPSRMNIGQVLETHLGMAAKGLGEKIDGMLKSQAAIKDLREFLDKIYNQVGGEQVDLDSLTDDDIMALADNLRAGVPMGTAVFDGAKESQVKDLLELAGMDRDGQQTLYDGRTGQKFDRKVTVGYMYMLKLNHLVDDKMHARSTGSYSLVTQQPLGGKAQFGGQRFGEMEVWALEAYGATYTLQEMLTVKSDDVEGRTRMYKNIVDGEQYMDPGMPESFNVLTKEIKSLGINIELKQTH.

The protein belongs to the RNA polymerase beta chain family. The RNAP catalytic core consists of 2 alpha, 1 beta, 1 beta' and 1 omega subunit. When a sigma factor is associated with the core the holoenzyme is formed, which can initiate transcription.

The enzyme catalyses RNA(n) + a ribonucleoside 5'-triphosphate = RNA(n+1) + diphosphate. Functionally, DNA-dependent RNA polymerase catalyzes the transcription of DNA into RNA using the four ribonucleoside triphosphates as substrates. This is DNA-directed RNA polymerase subunit beta from Psychrobacter arcticus (strain DSM 17307 / VKM B-2377 / 273-4).